The primary structure comprises 220 residues: Ribosomal RNA large subunit methyltransferase E (220 aa).

Gly60, Trp62, Asp92, Asp108, and Asp133 together coordinate S-adenosyl-L-methionine. Lys173 functions as the Proton acceptor in the catalytic mechanism.

This sequence belongs to the class I-like SAM-binding methyltransferase superfamily. RNA methyltransferase RlmE family.

The protein localises to the cytoplasm. It carries out the reaction uridine(2552) in 23S rRNA + S-adenosyl-L-methionine = 2'-O-methyluridine(2552) in 23S rRNA + S-adenosyl-L-homocysteine + H(+). Specifically methylates the uridine in position 2552 of 23S rRNA at the 2'-O position of the ribose in the fully assembled 50S ribosomal subunit. This is Ribosomal RNA large subunit methyltransferase E from Paraburkholderia xenovorans (strain LB400).